A 176-amino-acid polypeptide reads, in one-letter code: MIDDDGYRPNVGIVICNRQGQVMWARRYGQHSWQFPQGGINPGESAEQAMYRELFEEVGLSRKDVRILASTRNWLRYKLPKRLVRWDTKPVCIGQKQKWFLLQLMSADAEINMQTSSTPEFDGWRWVSYWYPVRQVVSFKRDVYRRVMKEFASVVMALQDNTPKPQNSPAYRRKRG.

The Nudix hydrolase domain occupies 6–149; it reads GYRPNVGIVI…KRDVYRRVMK (144 aa). The Nudix box signature appears at 38–59; it reads GGINPGESAEQAMYRELFEEVG.

The protein belongs to the Nudix hydrolase family. RppH subfamily. A divalent metal cation serves as cofactor.

Functionally, accelerates the degradation of transcripts by removing pyrophosphate from the 5'-end of triphosphorylated RNA, leading to a more labile monophosphorylated state that can stimulate subsequent ribonuclease cleavage. This Escherichia fergusonii (strain ATCC 35469 / DSM 13698 / CCUG 18766 / IAM 14443 / JCM 21226 / LMG 7866 / NBRC 102419 / NCTC 12128 / CDC 0568-73) protein is RNA pyrophosphohydrolase.